The primary structure comprises 173 residues: Alpha-crystallin A chain (173 aa).

N-acetylmethionine is present on methionine 1. Residues methionine 1–glutamate 63 are required for complex formation with BFSP1 and BFSP2. Glutamine 6 bears the Deamidated glutamine; partial mark. At serine 45 the chain carries Phosphoserine. Position 50 is a deamidated glutamine; partial (glutamine 50). The sHSP domain occupies leucine 52–serine 162. Residue lysine 70 is modified to N6-acetyllysine. Glutamine 90 carries the deamidated glutamine; partial modification. Residue lysine 99 is modified to N6-acetyllysine. The Zn(2+) site is built by histidine 100, glutamate 102, and histidine 107. The residue at position 122 (serine 122) is a Phosphoserine. Residue asparagine 123 is modified to Deamidated asparagine; partial. Residues lysine 145–serine 173 are disordered. Glutamine 147 is modified (deamidated glutamine; partial). Positions glycine 153 to proline 167 are enriched in basic and acidic residues. Position 154 (histidine 154) interacts with Zn(2+). Residue serine 162 is glycosylated (O-linked (GlcNAc) serine).

This sequence belongs to the small heat shock protein (HSP20) family. As to quaternary structure, heteromer composed of three CRYAA and one CRYAB subunits. Inter-subunit bridging via zinc ions enhances stability, which is crucial as there is no protein turn over in the lens. Can also form homodimers and homotetramers (dimers of dimers) which serve as the building blocks of homooligomers. Within homooligomers, the zinc-binding motif is created from residues of 3 different molecules. His-100 and Glu-102 from one molecule are ligands of the zinc ion, and His-107 and His-154 residues from additional molecules complete the site with tetrahedral coordination geometry. Part of a complex required for lens intermediate filament formation composed of BFSP1, BFSP2 and CRYAA. Acetylation at Lys-70 may increase chaperone activity. Post-translationally, undergoes age-dependent proteolytical cleavage at the C-terminus.

The protein resides in the cytoplasm. The protein localises to the nucleus. Functionally, contributes to the transparency and refractive index of the lens. Acts as a chaperone, preventing aggregation of various proteins under a wide range of stress conditions. Required for the correct formation of lens intermediate filaments as part of a complex composed of BFSP1, BFSP2 and CRYAA. This chain is Alpha-crystallin A chain (CRYAA), found in Ochotona princeps (Southern American pika).